We begin with the raw amino-acid sequence, 553 residues long: Efflux pump alnA (553 aa).

The segment covering 1–21 (MSSDDTVKQEHSCSADSEKQD) has biased composition (basic and acidic residues). Residues 1 to 36 (MSSDDTVKQEHSCSADSEKQDSSCASDNEQPKEPQS) are disordered. Transmembrane regions (helical) follow at residues 40–60 (IHGL…FLFA), 85–105 (WSGV…LQIF), 110–130 (IKWM…ICGA), 136–156 (MLIG…VGVM), 174–194 (AMGL…GAFT), 202–222 (WSFY…IFLL), 243–263 (LVGT…INFA), 270–290 (SEPG…VFGI), 319–339 (LLFV…YVIP), 355–375 (VRLL…GYLA), 382–402 (IPWY…MYTI), 413–433 (GYSS…HAVA), and 522–542 (TYIL…GMKW).

It belongs to the major facilitator superfamily. TCR/Tet family.

The protein localises to the cell membrane. Functionally, efflux pump; part of the gene cluster that mediates the biosynthesis of asperlin, a polyketide showing anti-inflammatory, antitumor and antibiotic activities. Is probably involved in the efflux of asperlin. This Emericella nidulans (strain FGSC A4 / ATCC 38163 / CBS 112.46 / NRRL 194 / M139) (Aspergillus nidulans) protein is Efflux pump alnA.